The chain runs to 978 residues: Glycine dehydrogenase (decarboxylating) (978 aa).

K726 bears the N6-(pyridoxal phosphate)lysine mark.

The protein belongs to the GcvP family. In terms of assembly, the glycine cleavage system is composed of four proteins: P, T, L and H. It depends on pyridoxal 5'-phosphate as a cofactor.

It catalyses the reaction N(6)-[(R)-lipoyl]-L-lysyl-[glycine-cleavage complex H protein] + glycine + H(+) = N(6)-[(R)-S(8)-aminomethyldihydrolipoyl]-L-lysyl-[glycine-cleavage complex H protein] + CO2. Its function is as follows. The glycine cleavage system catalyzes the degradation of glycine. The P protein binds the alpha-amino group of glycine through its pyridoxal phosphate cofactor; CO(2) is released and the remaining methylamine moiety is then transferred to the lipoamide cofactor of the H protein. In Paraburkholderia xenovorans (strain LB400), this protein is Glycine dehydrogenase (decarboxylating).